The primary structure comprises 87 residues: Translation initiation factor IF-1 1 (87 aa).

Residues 1–72 (MAKEELLELD…TKGRINFRHK (72 aa)) form the S1-like domain. The tract at residues 68–87 (NFRHKDANSPRPPRTGQPRR) is disordered. A compositionally biased stretch (pro residues) spans 77–87 (PRPPRTGQPRR).

Belongs to the IF-1 family. In terms of assembly, component of the 30S ribosomal translation pre-initiation complex which assembles on the 30S ribosome in the order IF-2 and IF-3, IF-1 and N-formylmethionyl-tRNA(fMet); mRNA recruitment can occur at any time during PIC assembly.

Its subcellular location is the cytoplasm. Its function is as follows. One of the essential components for the initiation of protein synthesis. Stabilizes the binding of IF-2 and IF-3 on the 30S subunit to which N-formylmethionyl-tRNA(fMet) subsequently binds. Helps modulate mRNA selection, yielding the 30S pre-initiation complex (PIC). Upon addition of the 50S ribosomal subunit IF-1, IF-2 and IF-3 are released leaving the mature 70S translation initiation complex. The sequence is that of Translation initiation factor IF-1 1 from Burkholderia lata (strain ATCC 17760 / DSM 23089 / LMG 22485 / NCIMB 9086 / R18194 / 383).